The primary structure comprises 4065 residues: MAATFSEPVAIIGTGCRFPGQCNTPSKLWELLQTPKDLLKEIPENRFSTEAFYHPQNYHHGTCNVRHSYFLEEDLRGFDAQFFGINPVEAHSVDPQQRLLLETVYESLEAAGLSMKEMQGSDTAVYVGVMSADFTDMIGRDPETFPTYFATGTARSILSNRLSFFFDWRGPSMTIDTACSSSLIEPRTGANKPDCAEQVAGSNLILGSEQYIAESKLQMLSPTGRSRMWDADADGYARGEGVAAIVLKKLSQAIADGDHIECIIRETGANQDGRTPGITMPSATAQEALIRTTYKKAGLDISKRSDRPQFFEAHGTGTPAGDPIEARAVSNAFFGPRSHFSPTSPDDTLFVGSIKTVVGHTEGTAGLAAVIKASLALQAGVVPPNMHLSKLNPKIEPFYGNVQILSEARQWPKLAEGGVRRVSVNSFGFGGANCHAILEAYEPESTLDRRRYNKRTGKCFTPFLFSAATENALAAQLDKYRAHVACGNASAPGDLKKLSLTLSNRRSALPWRAVVPASNSVERLIENLDQCNDFTNETSASSLGTRPRILGIFTGQGAQWPRMGAALIESSPAAAKILARLDESLRLLPIRDRPTWSLREKILEGAESSSVAMAFISQPVCAAVQIMLVDMLRAAGIEFSGVLGHSSGEISAAYAAGYLSSEDAIRAAYYRGFHMKSLTQKKGAMIAVGTSYDDAKELCDLPAFEGRVCVAASNSPFSVTLSGDADAIDEVKALMDEEKKFNRLLQVDRAYHSHHMKACAAAYMASLQQCGVRTLTRTAASSRCQWVSSVYVRHSAELAAEGGLEAKYWASNLTMPVMFTEALQKLLGDCKDGKAYDLAIEVGPHPALKGPAVQTMSEFLGGQSIPYTGVLSRGKDDVESFSTTLGYIWRTLGEGAVDFLGYSRFMNEEQGEATITPLNGLPTYPWDHHRKFWHESRLSRAYRFNKDPVNELLGRQILDGAPDQLRWRNVLKRNELDWLDGHQVQRQTVFPFMGYVSACVEAAMKIRGDANVQSIELQNFKVGQAVAFNDDDSWIEILVVLDSIKESKVKGTKTISAHFAFHSSSNNETVDMTTHAGCDVLVTYGDSISDLLPPPEIQADDEYFMLGVESDRFYNVLDDIGLGYTGPFRALSGLQRKLGKATGRIKNPASSKLWRKPLLVHPAMLDAGIQSIMLAYCYPGDTMMRSIYLPTGIRRLIINPEHCQTFAGEETDVLFQSSASVDDPQGLSGDVSIYAPGGLSCKAIQVEGLQTQPLFNPTEANDLNIFTELVWGVDRPDAKEIVNKVDVQQLDGDLLFSLERVAYYYLRILDKSIPLSQRTGIDWHFGQLFAYVDHVLSRVERGTNRFARKEWQHDTKEIILEILERYPDNIDLRLMRAVGENIAAVIRGEITMLEPMLQNNMLNDFYVVAHGMPRYTKYLASLASQIGHRYPHMHVLEIGAGTGGATKSFLGALDDKFSTYTFTDISSGFFEKARSVFASYSAKMSFKMLNIEKDIGDQGFVEGSYDVVIASLVLHATRNLGQTLRNVRRLLKPGGYLLLLEITENDQMRFGLLFGGLEGWWLGYDDGRALSPCINIEEWEKYLKQTGFSGIDTLMPHDEILPVPLSVIVSQAVDERTELLKQPLQRLDPSTTLVPQLTIIGSGALAEEVHRLLRPFCGRVNVIESLGHMGADQLPVGGAVICLADIQEPVFKSMDADKLRGFQTIFKQSGSALWVTQGTLNGNPYSRMVIGFGRTIVLEMLHLRLQFLDLDHEAPADPTAIVETFIRLHLAENWKNDGVKITPLLHSVEPEMHIDKEGRGFIPRFKLNKKQNDRYNSGRRKIVKEVPLRQQPVELVPPKSEDASWLLAEGKNMPELKGAIDIDVFYTVTRAVEVSGGTFLYAVLGARRDTKEVVLALSPTQASIIRVPQAFIIPAQDSVEYLQLFYTELLARAVLRDVAAGTVVVVLRPTSMLSCAVDRLAADRGARVLHLADEPGSDWDYLHHKSSKVQVQDWVKSRLGTEAPPAVLLLDFGADQFLLAYLLECLPAEVTRAMVGAQSTSSKARMKLGQSEQEIRSFLADVRYALLPAQQTHQSSKGRSSLKVFTLEHLTTNRAGSDVSVVSWPAGTSTIPVQVQPVNSKVTFSNDKTYWLVGLSGTLGLSLCEWMAQQGARYIVITSRNPNVDERWKNKMEKLGIKVEIIANNICDRKSVRSVYSHICQTMPPIGGVAQGAMVLHDTAFSELDLERINKVMQPKVNGSIYLEEIFHNTPLEFFVFFSSMACVTGNPGQSAYAAANMFMSGLAVQRRKRGLNASVVHIGAIFGNGYVTRELSLEQQNFLRKVGNMWLSEQDFRQLFAEAVLAGQPENTGSPELSTGMMTIDNSEGTKENITWFDNPMFQHCIKESTDGKLGGQTAKGRAVPVKTQLLEAINSAEVYEIIHDAFAAKLRSSLQLEDDRPIVDQTADTLGIDSLFAVDIRSWFIKELQLEIPVLKILGGATVGEILETAQQLLPMELLPKMDPNDKSPARKLKAQPDSSPDKAASAERSRAKAQTAIENDGDRKFAATRAESGAKKGETVSKKVEAVTRPSVQWQVPVEPSTAVGDLDDKSFPGEDGVRLRAGSLDTTFTHKSSASSSASILDASEDQSADSVWSLDTVNNELAVSKKTPISFAQSRIWFLEKFLEDPASALNITLTIELDGSLDVDRFGKAVKLVGQRHEALRTRFVHGDDFDAPMQEVLVHSTLSLEQQDIASDAEADEVYRELQKYRYKLGEGENMRIILLKKSNQLFHLVIGYHHINMDGVSLEVVLRELQMAYDSKRLPNFGTILQYPDFAALQQKEYKSGAWQDEIEFWRKEFDGRPPSVLPLLPMAKTRSRTALTSYSSHTAEFSLDQITLAGIQSACESSKATPFQFHLATFYALLSRMVDAADICIGIGSANRHDTAMMQSVGIYLNLLPIVLKSQPNETFASTLKRVRSKVMTAFAHSRVPFDVIVNELGASRATTHNPLFQVLVNYRQGTATRRSFCGCQSEVRSFEQGQAAYDLGLDIIENPGGECKVIMTGQSTLFVPEDMDMLKDMYQRLLLAFSRNQALRLAIPSLYDPEMVKHALRIGRGPSYTHKWPETLIHQIDDIAKQKSHSLAIVDGSGTFLTYAHMSRRTNAIAASLRGIRRGSRVGVHLDPGADWVCSVLAIMRRDAVYLPLDAVSGYSRLSAILQDSKPDLVLVDNSTEKDATAYFSPILAADQIFNIDTVSVTPPETLAIAAKRGSVAALMYTSGSTGVPKGIIMKHESFRNNIEIISEKLGYNNGHTVTLQQSSFNFDMSLGQIFLALSTGGTLHVVPRHLRADPVAISSIIALHGITNTSATPSEFISWVRYGSVEELRNSAWAAVHSGGEPVRDSLKAAFLTVNKPGLRLLDCYGPTEVTFCSHISDVDYGAEETSMNKGLEVLPNYATYIVDSGMKPVPAGVPGEVLIGGAGVVAGYLHTELNTRGFAHDSFASDEFRKQGWEQLHRTGDFGRINKLNGRLLLEGRIADDTQVKLRGLRIDLKEIEAAMVRAAKGDILDCIVSVAQSADVSDEYLVAYATARPDASNHRLEHLMHQLPLPQYMKPATLVLLEKMPTNASGKIDRSAFKSIPLPKATEDNGMQPEVGQDLNDTESRLKQLWEGVLPKHVFSQHKFTAASDFFNVGGSSMLLISLRAKIQDTFAVVVSLFQLFEASTLGDMAALVDELSSGSAEKTAGPNSALDINWEDETAVSPALLGIPVEKKFFTNPEIVVLTGSTGFLGRAILTRLLNDGIVKEIHCFAVREEIPLFDSPKIIVHRGDLTLPGFGLSQKELASIFSKAHAVIHNGADVSFVKSYHSLKPANLEATKQLVDLCLPYQISFHYISTAAVVNLTGEKSWEQRSVGRFPPPAGTDGYIATKWASERYLEKFNDQYGLPIWIHRPSSITGPGAPANDLMANVVEFSRSTAATLNTNSWSGWLDFISVDEAALQIVDEVYEDYSWPGHVKYLYESGERVVALEDMKNVLEREVGSVFEVVDVEEWISRAEKQGFNPLLGEYLKRVANAPLVFPKLIRHEGFF.

The Ketosynthase family 3 (KS3) domain occupies 6-440 (SEPVAIIGTG…GANCHAILEA (435 aa)). Active-site for beta-ketoacyl synthase activity residues include C179, H314, and H360. The interval 552-875 (IFTGQGAQWP…PYTGVLSRGK (324 aa)) is acyl transferase. Positions 950-1087 (NELLGRQILD…CDVLVTYGDS (138 aa)) are N-terminal hotdog fold. The region spanning 950–1260 (NELLGRQILD…TQPLFNPTEA (311 aa)) is the PKS/mFAS DH domain. Residues 951-1254 (ELLGRQILDG…QVEGLQTQPL (304 aa)) form a dehydratase (DH) domain region. H982 functions as the Proton acceptor; for dehydratase activity in the catalytic mechanism. A C-terminal hotdog fold region spans residues 1102–1260 (EYFMLGVESD…TQPLFNPTEA (159 aa)). The active-site Proton donor; for dehydratase activity is D1166. A methyltransferase (MT) domain region spans residues 1409 to 1593 (AHGMPRYTKY…KQTGFSGIDT (185 aa)). Residues 2129–2302 (TYWLVGLSGT…NASVVHIGAI (174 aa)) are ketoreductase (KR)domain. The region spanning 2411–2492 (INSAEVYEII…EILETAQQLL (82 aa)) is the Carrier 1 domain. S2452 bears the O-(pantetheine 4'-phosphoryl)serine mark. The tract at residues 2497 to 2561 (LPKMDPNDKS…GAKKGETVSK (65 aa)) is disordered. Over residues 2551-2561 (SGAKKGETVSK) the composition is skewed to basic and acidic residues. A condensation region spans residues 2645–3076 (SKKTPISFAQ…FSRNQALRLA (432 aa)). The interval 3112 to 3516 (DIAKQKSHSL…RLLLEGRIAD (405 aa)) is adenylation. The Carrier 2 domain maps to 3634-3714 (QDLNDTESRL…DMAALVDELS (81 aa)). S3674 is subject to O-(pantetheine 4'-phosphoryl)serine. The tract at residues 3760 to 3975 (LTGSTGFLGR…LDFISVDEAA (216 aa)) is reductase-like.

This sequence belongs to the NRP synthetase family.

Its pathway is mycotoxin biosynthesis. Functionally, hybrid PKS-NRPS synthetase; part of the gene cluster that mediates the biosynthesis of the mycotoxin pyrichalasin H, a tyrosine-derived cytochalasan that inhibits the growth of rice seedlings, but also inhibits lymphocyte capping and actin polymerization and alters cell morphology. Pyrichalasin H is indicated as the responsible agent for the genus-specific pathogenicity of M.grisea toward crabgrass. The first step in the pathway is catalyzed by the O-methyltransferase pyiA which methylates free tyrosine to generate the precursor O-methyltyrosine. The hybrid PKS-NRPS pyiS, assisted by the enoyl reductase pyiC, are responsible for fusion of the O-methyltyrosine precursor and the polyketide backbone. The polyketide synthase module (PKS) of pyiS is responsible for the synthesis of the polyketide backbone and the downstream nonribosomal peptide synthetase (NRPS) amidates the carboxyl end of the polyketide with the O-methyltyrosine precursor. As the NRPS A-domain demonstrates substrate tolerance, pyiS can also use phenylalanine, tyrosine and even para-chlorophenylalanine as amino acid precursor, which leads to the production of novel cytochalasans, including halogenated cytochalasans. Because pyiS lacks a designated enoylreductase (ER) domain, the required activity is provided the enoyl reductase pyiC. Reduction by the hydrolyase pyiE leads to 1,5-dihydropyrrolone, which is substrate for dehydration and intra-molecular Diels-Alder cyclization by the Diels-Alderase pyiF to yield the required isoindolone-fused macrocycle. The tailoring cytochrome P450 monooxygenases piyD and piyG catalyze the hydroxylation at C-18 and C-7, respectivily, whereas the short-chain dehydrogenase/reductase pyiH reduces the carbonyl at C-21 in preparation for the transfer of an acetyl group by the acetyltransferase pyiB. These 3 reactions whose order is not clear yet, lead to the production of O-methylpyrichalasin J, a deacetylated pyrichalasin H. Finally, pyiB to converts O-methylpyrichalasin J into the final product pyrichalasin H via acetylation of C-21. The polypeptide is Polyketide synthase-nonribosomal peptide synthetase pyiS (Pyricularia grisea (Crabgrass-specific blast fungus)).